We begin with the raw amino-acid sequence, 136 residues long: Aspartate 1-decarboxylase (136 aa).

Catalysis depends on Ser-25, which acts as the Schiff-base intermediate with substrate; via pyruvic acid. At Ser-25 the chain carries Pyruvic acid (Ser). Residue Thr-57 participates in substrate binding. Catalysis depends on Tyr-58, which acts as the Proton donor. Gly-73–Ala-75 lines the substrate pocket.

Belongs to the PanD family. In terms of assembly, heterooctamer of four alpha and four beta subunits. Pyruvate is required as a cofactor. Is synthesized initially as an inactive proenzyme, which is activated by self-cleavage at a specific serine bond to produce a beta-subunit with a hydroxyl group at its C-terminus and an alpha-subunit with a pyruvoyl group at its N-terminus.

The protein resides in the cytoplasm. The enzyme catalyses L-aspartate + H(+) = beta-alanine + CO2. It functions in the pathway cofactor biosynthesis; (R)-pantothenate biosynthesis; beta-alanine from L-aspartate: step 1/1. Functionally, catalyzes the pyruvoyl-dependent decarboxylation of aspartate to produce beta-alanine. The protein is Aspartate 1-decarboxylase of Corynebacterium efficiens (strain DSM 44549 / YS-314 / AJ 12310 / JCM 11189 / NBRC 100395).